A 296-amino-acid chain; its full sequence is Nucleotide-binding protein SPCG_1551 (296 aa).

13 to 20 lines the ATP pocket; that stretch reads GMSGAGKT. A GTP-binding site is contributed by 63-66; sequence DMRS.

The protein belongs to the RapZ-like family.

Displays ATPase and GTPase activities. This is Nucleotide-binding protein SPCG_1551 from Streptococcus pneumoniae (strain CGSP14).